Here is a 436-residue protein sequence, read N- to C-terminus: Sulfopropanediol 3-dehydrogenase (436 aa).

3 residues coordinate NAD(+): tyrosine 118, glutamine 180, and asparagine 203. Residues glutamine 248 and histidine 251 each coordinate Zn(2+). Catalysis depends on proton acceptor residues glutamate 318 and histidine 319. Zn(2+) contacts are provided by aspartate 352 and histidine 411.

It belongs to the histidinol dehydrogenase family. HpsN subfamily. Zn(2+) is required as a cofactor.

The catalysed reaction is (2R)-3-sulfopropanediol + 2 NAD(+) + H2O = (2R)-3-sulfolactate + 2 NADH + 3 H(+). Its function is as follows. Catalyzes the NAD-dependent oxidation of (R)-2,3-dihydroxypropane-1-sulfonate to (R)-3-sulfolactate. This chain is Sulfopropanediol 3-dehydrogenase, found in Cupriavidus pinatubonensis (strain JMP 134 / LMG 1197) (Cupriavidus necator (strain JMP 134)).